Here is a 441-residue protein sequence, read N- to C-terminus: Amino-acid acetyltransferase (441 aa).

One can recognise an N-acetyltransferase domain in the interval 295–434 (EKVRGAGIDD…KALYNFQRRS (140 aa)).

Belongs to the acetyltransferase family. ArgA subfamily.

The protein resides in the cytoplasm. It catalyses the reaction L-glutamate + acetyl-CoA = N-acetyl-L-glutamate + CoA + H(+). The protein operates within amino-acid biosynthesis; L-arginine biosynthesis; N(2)-acetyl-L-ornithine from L-glutamate: step 1/4. The protein is Amino-acid acetyltransferase of Photobacterium profundum (strain SS9).